The following is a 186-amino-acid chain: Elongation factor P (186 aa).

It belongs to the elongation factor P family.

It is found in the cytoplasm. Its pathway is protein biosynthesis; polypeptide chain elongation. In terms of biological role, involved in peptide bond synthesis. Stimulates efficient translation and peptide-bond synthesis on native or reconstituted 70S ribosomes in vitro. Probably functions indirectly by altering the affinity of the ribosome for aminoacyl-tRNA, thus increasing their reactivity as acceptors for peptidyl transferase. The sequence is that of Elongation factor P from Mycoplasmopsis synoviae (strain 53) (Mycoplasma synoviae).